The following is a 151-amino-acid chain: Peptide methionine sulfoxide reductase MsrB (151 aa).

The MsrB domain maps to 5–127 (KEERLKQLTR…NSAALRFVPK (123 aa)). The active-site Nucleophile is the Cys-116.

Belongs to the MsrB Met sulfoxide reductase family.

It catalyses the reaction L-methionyl-[protein] + [thioredoxin]-disulfide + H2O = L-methionyl-(R)-S-oxide-[protein] + [thioredoxin]-dithiol. The polypeptide is Peptide methionine sulfoxide reductase MsrB (Bacillus licheniformis (strain ATCC 14580 / DSM 13 / JCM 2505 / CCUG 7422 / NBRC 12200 / NCIMB 9375 / NCTC 10341 / NRRL NRS-1264 / Gibson 46)).